We begin with the raw amino-acid sequence, 246 residues long: Probable phosphatase Ssed_2939 (246 aa).

Zn(2+) contacts are provided by histidine 8, histidine 10, histidine 16, histidine 41, glutamate 74, histidine 102, histidine 132, aspartate 193, and histidine 195.

It belongs to the PHP family. Zn(2+) is required as a cofactor.

The protein is Probable phosphatase Ssed_2939 of Shewanella sediminis (strain HAW-EB3).